The sequence spans 189 residues: Small ribosomal subunit protein uS7 (189 aa).

This sequence belongs to the universal ribosomal protein uS7 family. As to quaternary structure, component of the small ribosomal subunit.

It is found in the cytoplasm. In Encephalitozoon cuniculi (strain GB-M1) (Microsporidian parasite), this protein is Small ribosomal subunit protein uS7 (RPS5).